The following is a 579-amino-acid chain: Mitochondrial distribution and morphology protein 31 (579 aa).

The transit peptide at 1-47 directs the protein to the mitochondrion; that stretch reads MSLFTRPFLRSPRQFSVARYVYWARSPALRSNLRIPSIAAASLRAYS. Over 48–114 the chain is Mitochondrial matrix; the sequence is NESKTGRDAP…SDDISAFISW (67 aa). The chain crosses the membrane as a helical span at residues 115 to 135; the sequence is ILVSNIFIFIFWTTTFVSLIL. Over 136 to 558 the chain is Mitochondrial intermembrane; it reads YLINTVFAQE…DEKRTLRLRR (423 aa). Residues 559-578 form a helical membrane-spanning segment; it reads VGFWSLQLILQVILMSLGAI. Position 579 (alanine 579) is a topological domain, mitochondrial matrix.

It belongs to the MDM31/MDM32 family. In terms of assembly, interacts with MDM32. Participates in a complex of about 600 kDa.

Its subcellular location is the mitochondrion inner membrane. In terms of biological role, involved in the organization of the mitochondrial membranes and the global structure of the mitochondria. Also required for mitochondrial distribution and mobility as well as for the maintenance of mitochondrial DNA nucleoids structures. This Saccharomyces cerevisiae (strain ATCC 204508 / S288c) (Baker's yeast) protein is Mitochondrial distribution and morphology protein 31 (MDM31).